The chain runs to 254 residues: Glucosamine-6-phosphate deaminase (254 aa).

The Proton acceptor; for enolization step role is filled by Asp-67. Residue Asn-136 is the For ring-opening step of the active site. His-138 acts as the Proton acceptor; for ring-opening step in catalysis. The active-site For ring-opening step is the Glu-143.

This sequence belongs to the glucosamine/galactosamine-6-phosphate isomerase family. NagB subfamily.

The catalysed reaction is alpha-D-glucosamine 6-phosphate + H2O = beta-D-fructose 6-phosphate + NH4(+). Its pathway is amino-sugar metabolism; N-acetylneuraminate degradation; D-fructose 6-phosphate from N-acetylneuraminate: step 5/5. Functionally, catalyzes the reversible isomerization-deamination of glucosamine 6-phosphate (GlcN6P) to form fructose 6-phosphate (Fru6P) and ammonium ion. This chain is Glucosamine-6-phosphate deaminase, found in Brevibacillus brevis (strain 47 / JCM 6285 / NBRC 100599).